A 377-amino-acid polypeptide reads, in one-letter code: Lipoyl synthase, mitochondrial (377 aa).

Residues Cys103, Cys108, Cys114, Cys134, Cys138, Cys141, and Ser349 each contribute to the [4Fe-4S] cluster site. The Radical SAM core domain occupies 119–338 (EHGTQTATIM…EERGNELGFL (220 aa)).

It belongs to the radical SAM superfamily. Lipoyl synthase family. [4Fe-4S] cluster serves as cofactor.

The protein localises to the mitochondrion. It catalyses the reaction [[Fe-S] cluster scaffold protein carrying a second [4Fe-4S](2+) cluster] + N(6)-octanoyl-L-lysyl-[protein] + 2 oxidized [2Fe-2S]-[ferredoxin] + 2 S-adenosyl-L-methionine + 4 H(+) = [[Fe-S] cluster scaffold protein] + N(6)-[(R)-dihydrolipoyl]-L-lysyl-[protein] + 4 Fe(3+) + 2 hydrogen sulfide + 2 5'-deoxyadenosine + 2 L-methionine + 2 reduced [2Fe-2S]-[ferredoxin]. It participates in protein modification; protein lipoylation via endogenous pathway; protein N(6)-(lipoyl)lysine from octanoyl-[acyl-carrier-protein]: step 2/2. Catalyzes the radical-mediated insertion of two sulfur atoms into the C-6 and C-8 positions of the octanoyl moiety bound to the lipoyl domains of lipoate-dependent enzymes, thereby converting the octanoylated domains into lipoylated derivatives. This chain is Lipoyl synthase, mitochondrial, found in Drosophila melanogaster (Fruit fly).